The following is a 259-amino-acid chain: Bisphosphoglycerate mutase (259 aa).

Ser2 carries the post-translational modification N-acetylserine. N-linked (Glc) (glycation) lysine; in vitro glycans are attached at residues Lys3 and Lys5. 10–17 (RHGEGAWN) lines the substrate pocket. His11 functions as the Tele-phosphohistidine intermediate in the catalytic mechanism. The N-linked (Glc) (glycation) lysine; in vitro glycan is linked to Lys18. Residue 23–24 (CS) coordinates substrate. An N-linked (Glc) (glycation) lysine; in vitro glycan is attached at Lys43. Substrate is bound by residues Arg62, 89–92 (ERHY), Arg100, and 116–117 (RR). Catalysis depends on Glu89, which acts as the Proton donor/acceptor. Residue Thr122 is modified to Phosphothreonine. A glycan (N-linked (Glc) (glycation) lysine) is linked at Lys159. Substrate is bound at residue 189-190 (GN). Residue Lys197 is glycosylated (N-linked (Glc) (glycation) lysine; in vitro).

Belongs to the phosphoglycerate mutase family. BPG-dependent PGAM subfamily. As to quaternary structure, homodimer. In terms of processing, glycation of Lys-159 in diabetic patients inactivates the enzyme. As to expression, expressed in red blood cells. Expressed in non-erythroid cells of the placenta; present in the syncytiotrophoblast layer of the placental villi at the feto-maternal interface (at protein level).

The catalysed reaction is (2R)-3-phospho-glyceroyl phosphate = (2R)-2,3-bisphosphoglycerate + H(+). It carries out the reaction (2R)-2-phosphoglycerate = (2R)-3-phosphoglycerate. With respect to regulation, at alkaline pH BPGM favors the synthase reaction; however, at lower pH the phosphatase reaction is dominant. Inhibited by citrate. Plays a major role in regulating hemoglobin oxygen affinity by controlling the levels of its allosteric effector 2,3-bisphosphoglycerate (2,3-BPG). Also exhibits mutase (EC 5.4.2.11) activity. The sequence is that of Bisphosphoglycerate mutase (BPGM) from Homo sapiens (Human).